The following is a 313-amino-acid chain: Jacalin-related lectin 8 (313 aa).

The signal sequence occupies residues 1–23 (MFIIYLFIFLSSAIIDSNGVAMA). Jacalin-type lectin domains lie at 24–163 (QKIE…YVKT) and 165–309 (PTKS…YFSP).

It belongs to the jacalin lectin family.

The polypeptide is Jacalin-related lectin 8 (JAL8) (Arabidopsis thaliana (Mouse-ear cress)).